The chain runs to 551 residues: Seventh homolog of septin 1 (551 aa).

Serine 2 bears the N-acetylserine mark. The region spanning 20–339 (RGITYTMLLC…ENYRSEKLSS (320 aa)) is the Septin-type G domain. The tract at residues 30–37 (GPAGTGKT) is G1 motif. Residues 30–37 (GPAGTGKT), glycine 138, 218–226 (RADSFTKEE), and arginine 288 each bind GTP. The tract at residues 135-138 (MTHG) is G3 motif. The G4 motif stretch occupies residues 217 to 220 (TRAD). The disordered stretch occupies residues 381-417 (NLRADTPRNQVSGNFKENEYEDNGEHDSAENEQEMSP). Tyrosine 400 carries the post-translational modification Phosphotyrosine. Phosphoserine occurs at positions 408 and 416. Residues 418–518 (VRQLGREIKQ…KLINQNKLNG (101 aa)) are a coiled coil. Residues lysine 426 and lysine 437 each participate in a glycyl lysine isopeptide (Lys-Gly) (interchain with G-Cter in SUMO) cross-link. A phosphoserine mark is found at serine 447, serine 460, serine 519, serine 520, serine 522, and serine 525. Residues 515–551 (KLNGSSSSINSLQQSTRSQIKKNDTYTDLASIASGRD) are disordered. Positions 519–532 (SSSSINSLQQSTRS) are enriched in low complexity. Position 539 is a phosphothreonine (threonine 539). Serine 545 and serine 548 each carry phosphoserine.

The protein belongs to the TRAFAC class TrmE-Era-EngA-EngB-Septin-like GTPase superfamily. Septin GTPase family. Component of the septin complex which consists of CDC3, CDC10, CDC11, CDC12 and probably SHS1 and rearranges to a cortical collar of highly ordered filaments at the mother-bud-neck. A complex formed by CDC3, CDC10, CDC11 and CDC12 is capable of forming long filaments in vitro and the components seem to be present in a 2:2:2:2 arrangement in vivo. The filaments are proposed to be formed by the end-to-end polymerization of CDC3-CDC12-CDC11 complexes with CDC10 serving as a bridge to bundle the polymers into paired filaments. Component of the GIN4 complex composed of at least BNI5, CDC3, CDC10, CDC11, CDC12, GIN4, NAP1 and SHS1. Self-associates. Interacts with CDC11 and SPA2. In terms of processing, phosphorylated by GIN4 and CLA4. Phosphorylation state is essential for septin ring dynamics during telophase. Post-translationally, sumoylated during mitosis on the mother cell side of the bud neck. Sumoylation probably plays a central role in regulating septin ring disassembly during the cell cycle.

It localises to the membrane. It is found in the bud neck. In terms of biological role, septins are GTPases involved in cytokinesis that assemble early in the cell cycle as a patch at the incipient bud site and form a ring approximately 15 minutes before bud emergence, which transforms into an hour-glass shaped collar of cortical filaments that spans both sides of the mother-bud neck. This collar persists until just before cytokinesis, when it splits into two rings that occupy opposite sides of the neck. The septins at the bud neck serve as a structural scaffold that recruits different components involved in diverse processes at specific stages during the cell cycle. Many proteins bind asymmetrically to the septin collar. The septin assembly is regulated by protein kinases GIN4 and/or CLA4. May act by recruiting MYO1 and HOF1, a protein involved in septation, to the site of cleavage. Septins are also involved in cell morphogenesis, bud site selection, chitin deposition, cell cycle regulation, cell compartmentalization and spore wall formation. CDCd11 with SHS1 11 are involved in the recruitment of BNI5 and thereby ensure efficient localization at the bud neck of MYO1, the type II myosin of the actomyosin contractile ring. This is Seventh homolog of septin 1 from Saccharomyces cerevisiae (strain ATCC 204508 / S288c) (Baker's yeast).